A 453-amino-acid polypeptide reads, in one-letter code: Chromosomal replication initiator protein DnaA (453 aa).

The tract at residues 1-76 (MSGDAAALWP…LAWRQQLPAV (76 aa)) is domain I, interacts with DnaA modulators. A domain II region spans residues 76–115 (VRSVSVRGGVAATERAATLASVPLPTFDAPAAPAANPALL). Residues 116-333 (GFDPRLSFDR…GALNKLLAYA (218 aa)) are domain III, AAA+ region. Residues G160, G162, K163, and T164 each coordinate ATP. A domain IV, binds dsDNA region spans residues 334–453 (ALTGARIDLM…IAAIRRSLNS (120 aa)).

The protein belongs to the DnaA family. In terms of assembly, oligomerizes as a right-handed, spiral filament on DNA at oriC.

The protein resides in the cytoplasm. Plays an essential role in the initiation and regulation of chromosomal replication. ATP-DnaA binds to the origin of replication (oriC) to initiate formation of the DNA replication initiation complex once per cell cycle. Binds the DnaA box (a 9 base pair repeat at the origin) and separates the double-stranded (ds)DNA. Forms a right-handed helical filament on oriC DNA; dsDNA binds to the exterior of the filament while single-stranded (ss)DNA is stabiized in the filament's interior. The ATP-DnaA-oriC complex binds and stabilizes one strand of the AT-rich DNA unwinding element (DUE), permitting loading of DNA polymerase. After initiation quickly degrades to an ADP-DnaA complex that is not apt for DNA replication. Binds acidic phospholipids. This is Chromosomal replication initiator protein DnaA from Sphingopyxis alaskensis (strain DSM 13593 / LMG 18877 / RB2256) (Sphingomonas alaskensis).